The chain runs to 250 residues: Cholesterol ring-cleaving hydrolase IpdB subunit (250 aa).

This sequence belongs to the 3-oxoacid CoA-transferase subunit B family. In terms of assembly, heterotetramer composed of 2 IpdA subunits and 2 IpdB subunits.

The enzyme catalyses (3E)-2-(2-carboxylatoethyl)-3-methyl-6-oxocyclohex-1-ene-1-carboxyl-CoA + H2O = 6-methyl-3,7-dioxodecanedioyl-CoA. The protein operates within steroid metabolism; cholesterol degradation. Involved in the final steps of cholesterol and steroid degradation. Opens the last steroid ring of cholesterol by catalyzing the hydrolysis of (3E)-2-(2-carboxylatoethyl)-3-methyl-6-oxocyclohex-1-ene-1-carboxyl-CoA (COCHEA-CoA) to 6-methyl-3,7-dioxodecanedioyl-CoA (MeDODA-CoA). The protein is Cholesterol ring-cleaving hydrolase IpdB subunit of Mycobacterium bovis (strain ATCC BAA-935 / AF2122/97).